We begin with the raw amino-acid sequence, 356 residues long: Homoserine O-succinyltransferase (356 aa).

Cys146 serves as the catalytic Acyl-thioester intermediate. Substrate contacts are provided by Lys167 and Ser196. The Proton acceptor role is filled by His239. The active site involves Glu241. Substrate is bound at residue Arg253.

Belongs to the MetA family.

It is found in the cytoplasm. It carries out the reaction L-homoserine + succinyl-CoA = O-succinyl-L-homoserine + CoA. Its pathway is amino-acid biosynthesis; L-methionine biosynthesis via de novo pathway; O-succinyl-L-homoserine from L-homoserine: step 1/1. In terms of biological role, transfers a succinyl group from succinyl-CoA to L-homoserine, forming succinyl-L-homoserine. The chain is Homoserine O-succinyltransferase from Thioalkalivibrio nitratireducens (strain DSM 14787 / UNIQEM 213 / ALEN2).